A 46-amino-acid chain; its full sequence is Large ribosomal subunit protein bL34 (46 aa).

The protein belongs to the bacterial ribosomal protein bL34 family.

In Trichodesmium erythraeum (strain IMS101), this protein is Large ribosomal subunit protein bL34.